The chain runs to 265 residues: Vegetative storage protein 2 (265 aa).

The signal sequence occupies residues 1 to 18; the sequence is MKILSLSLLLLLAATVSA. N-linked (GlcNAc...) asparagine glycans are attached at residues Asn110, Asn188, and Asn210.

It belongs to the APS1/VSP family. Highly expressed in flowers, but also found in leaves, vegetative shoots, petioles, peduncles, and receptacles of floral organs.

Functionally, may function as somatic storage protein during early seedling development. The protein is Vegetative storage protein 2 (VSP2) of Arabidopsis thaliana (Mouse-ear cress).